A 264-amino-acid chain; its full sequence is Hydroxyethylthiazole kinase (264 aa).

Residue Met45 coordinates substrate. ATP-binding residues include Arg121 and Ser167. Residue Gly194 coordinates substrate.

It belongs to the Thz kinase family. Mg(2+) is required as a cofactor.

The catalysed reaction is 5-(2-hydroxyethyl)-4-methylthiazole + ATP = 4-methyl-5-(2-phosphooxyethyl)-thiazole + ADP + H(+). Its pathway is cofactor biosynthesis; thiamine diphosphate biosynthesis; 4-methyl-5-(2-phosphoethyl)-thiazole from 5-(2-hydroxyethyl)-4-methylthiazole: step 1/1. In terms of biological role, catalyzes the phosphorylation of the hydroxyl group of 4-methyl-5-beta-hydroxyethylthiazole (THZ). This is Hydroxyethylthiazole kinase from Aliivibrio salmonicida (strain LFI1238) (Vibrio salmonicida (strain LFI1238)).